The following is a 228-amino-acid chain: L-ribulose-5-phosphate 4-epimerase UlaF (228 aa).

Substrate-binding positions include 26 to 27, 43 to 44, and 72 to 73; these read GN, SG, and SS. Zn(2+) is bound by residues aspartate 74, histidine 93, and histidine 95. Aspartate 118 (proton donor/acceptor) is an active-site residue. A Zn(2+)-binding site is contributed by histidine 167. The active-site Proton donor/acceptor is tyrosine 225.

This sequence belongs to the aldolase class II family. AraD/FucA subfamily. Zn(2+) is required as a cofactor.

It carries out the reaction L-ribulose 5-phosphate = D-xylulose 5-phosphate. It participates in cofactor degradation; L-ascorbate degradation; D-xylulose 5-phosphate from L-ascorbate: step 4/4. In terms of biological role, catalyzes the isomerization of L-ribulose 5-phosphate to D-xylulose 5-phosphate. Is involved in the anaerobic L-ascorbate utilization. The protein is L-ribulose-5-phosphate 4-epimerase UlaF of Escherichia coli (strain 55989 / EAEC).